The following is a 30-amino-acid chain: Photosystem I reaction center subunit XII (30 aa).

A helical membrane pass occupies residues 7 to 29; sequence LIAFFLAFTAGILAIKLGQALYD.

It belongs to the PsaM family.

The protein resides in the plastid. It localises to the chloroplast thylakoid membrane. The polypeptide is Photosystem I reaction center subunit XII (Pinus thunbergii (Japanese black pine)).